The sequence spans 424 residues: COUP transcription factor 1 (424 aa).

The segment at 1–82 (MAMVVSSWRD…QGPPGSGQSQ (82 aa)) is disordered. Residues 39–68 (EQQQQQAGSGAPHTPQTPGQPGAPATPGTA) are compositionally biased toward low complexity. The segment at residues 84 to 159 (HIECVVCGDK…VGMRREAVQR (76 aa)) is a DNA-binding region (nuclear receptor). 2 consecutive NR C4-type zinc fingers follow at residues 87–107 (CVVCGDKSSGKHYGQFTCEGC) and 123–147 (CRANRNCPIDQHHRNQCQYCRLKKC). The NR LBD domain occupies 185–411 (YLSGYISLLL…TLIRDMLLSG (227 aa)).

Belongs to the nuclear hormone receptor family. NR2 subfamily. In terms of assembly, binds DNA as dimer; homodimer and probable heterodimer with NR2F6. Interacts with GTF2B; this interaction is direct. Interacts with COPS2.

The protein localises to the nucleus. Its function is as follows. Coup (chicken ovalbumin upstream promoter) transcription factor binds to the ovalbumin promoter and, in conjunction with another protein (S300-II) stimulates initiation of transcription. Binds to both direct repeats and palindromes of the 5'-AGGTCA-3' motif. Represses transcriptional activity of LHCG. The chain is COUP transcription factor 1 (NR2F1) from Bos taurus (Bovine).